Consider the following 426-residue polypeptide: Glutamate-1-semialdehyde 2,1-aminomutase (426 aa).

Position 265 is an N6-(pyridoxal phosphate)lysine (K265).

The protein belongs to the class-III pyridoxal-phosphate-dependent aminotransferase family. HemL subfamily. As to quaternary structure, homodimer. Pyridoxal 5'-phosphate is required as a cofactor.

Its subcellular location is the cytoplasm. The catalysed reaction is (S)-4-amino-5-oxopentanoate = 5-aminolevulinate. The protein operates within porphyrin-containing compound metabolism; protoporphyrin-IX biosynthesis; 5-aminolevulinate from L-glutamyl-tRNA(Glu): step 2/2. This chain is Glutamate-1-semialdehyde 2,1-aminomutase, found in Salmonella newport (strain SL254).